The sequence spans 248 residues: Probable transcriptional regulatory protein HCH_04926 (248 aa).

This sequence belongs to the TACO1 family.

The protein resides in the cytoplasm. This chain is Probable transcriptional regulatory protein HCH_04926, found in Hahella chejuensis (strain KCTC 2396).